Consider the following 311-residue polypeptide: Olfactory receptor 5M8 (311 aa).

The Extracellular portion of the chain corresponds to 1 to 24; the sequence is MRRNCTLVTEFILLGLTSRRELQI. The N-linked (GlcNAc...) asparagine glycan is linked to Asn4. The chain crosses the membrane as a helical span at residues 25–45; the sequence is LLFTLFLAIYMVTVAGNLGMI. Topologically, residues 46 to 53 are cytoplasmic; the sequence is VLIQANAW. A helical membrane pass occupies residues 54–74; sequence LHMPMYFFLSHLSFVDLCFSS. Residues 75–98 lie on the Extracellular side of the membrane; it reads NVTPKMLEIFLSEKKSISYPACLV. Residues Cys96 and Cys188 are joined by a disulfide bond. A helical membrane pass occupies residues 99–119; the sequence is QCYLFIALVHVEIYILAVMAF. The Cytoplasmic portion of the chain corresponds to 120–138; it reads DRYMAICNPLLYGSRMSKS. A helical transmembrane segment spans residues 139–159; sequence VCSFLITVPYVYGALTGLMET. The Extracellular portion of the chain corresponds to 160 to 195; sequence MWTYNLAFCGPNEINHFYCADPPLIKLACSDTYNKE. A helical transmembrane segment spans residues 196 to 216; it reads LSMFIVAGWNLSFSLFIICIS. Residues 217–236 are Cytoplasmic-facing; sequence YLYIFPAILKIRSTEGRQKA. Residues 237–257 traverse the membrane as a helical segment; that stretch reads FSTCGSHLTAVTIFYATLFFM. Topologically, residues 258–270 are extracellular; that stretch reads YLRPPSKESVEQG. Residues 271 to 291 form a helical membrane-spanning segment; it reads KMVAVFYTTVIPMLNLIIYSL. The Cytoplasmic segment spans residues 292 to 311; it reads RNKNVKEALIKELSMKIYFS.

It belongs to the G-protein coupled receptor 1 family.

Its subcellular location is the cell membrane. Odorant receptor. This chain is Olfactory receptor 5M8 (OR5M8), found in Homo sapiens (Human).